Consider the following 483-residue polypeptide: Siroheme synthase (483 aa).

Positions 1-203 (MNYFPIFANL…RQNTLAEREL (203 aa)) are precorrin-2 dehydrogenase /sirohydrochlorin ferrochelatase. NAD(+) is bound by residues 22 to 23 (AV) and 43 to 44 (KH). Residue Ser-128 is modified to Phosphoserine. The interval 217–483 (GSVSLVGAGP…GGLNAGQRAA (267 aa)) is uroporphyrinogen-III C-methyltransferase. Pro-226 contributes to the S-adenosyl-L-methionine binding site. The active-site Proton acceptor is Asp-249. The active-site Proton donor is Lys-271. S-adenosyl-L-methionine-binding positions include 302–304 (GGD), Val-307, 332–333 (TA), Met-384, and Gly-413.

In the N-terminal section; belongs to the precorrin-2 dehydrogenase / sirohydrochlorin ferrochelatase family. This sequence in the C-terminal section; belongs to the precorrin methyltransferase family.

It carries out the reaction uroporphyrinogen III + 2 S-adenosyl-L-methionine = precorrin-2 + 2 S-adenosyl-L-homocysteine + H(+). It catalyses the reaction precorrin-2 + NAD(+) = sirohydrochlorin + NADH + 2 H(+). The enzyme catalyses siroheme + 2 H(+) = sirohydrochlorin + Fe(2+). It participates in cofactor biosynthesis; adenosylcobalamin biosynthesis; precorrin-2 from uroporphyrinogen III: step 1/1. The protein operates within cofactor biosynthesis; adenosylcobalamin biosynthesis; sirohydrochlorin from precorrin-2: step 1/1. It functions in the pathway porphyrin-containing compound metabolism; siroheme biosynthesis; precorrin-2 from uroporphyrinogen III: step 1/1. Its pathway is porphyrin-containing compound metabolism; siroheme biosynthesis; siroheme from sirohydrochlorin: step 1/1. It participates in porphyrin-containing compound metabolism; siroheme biosynthesis; sirohydrochlorin from precorrin-2: step 1/1. Multifunctional enzyme that catalyzes the SAM-dependent methylations of uroporphyrinogen III at position C-2 and C-7 to form precorrin-2 via precorrin-1. Then it catalyzes the NAD-dependent ring dehydrogenation of precorrin-2 to yield sirohydrochlorin. Finally, it catalyzes the ferrochelation of sirohydrochlorin to yield siroheme. This Neisseria meningitidis serogroup B (strain ATCC BAA-335 / MC58) protein is Siroheme synthase.